A 335-amino-acid polypeptide reads, in one-letter code: MYFQILVLMSEGYGRSLFSEKHFPHDRQLLPPFTTTMSLGSFFSFPASSAFFDRKKDDGVIDNPNVELVNRNLWSTFLECGTEMIITKKGRRMFPLVKLKLSGLDKNSNYTIIMEMISVDKLRYKFWNGNWIVAGVGEHHPLPTCFVHPQSPRSGEWWMTDGVDFKMAKLSNNPFNNDGHIVLNSMHRYNPRFHIVRADSSGQPILASLKTFSFKETEFIAVTAYQNDVVTKCKIDNNPFAKGFRNIDTVRKRKMNQIISTPPASEDEEPEVKRTKSEIEAVMFSDPKVPQMSLQLISQWQEALLSTIVQIPITNQKSSSERKSGFGVVDLLGSS.

The T-box DNA-binding region spans 73-246; sequence LWSTFLECGT…NNPFAKGFRN (174 aa).

It is found in the nucleus. The chain is Putative T-box protein 7 from Caenorhabditis elegans.